A 370-amino-acid chain; its full sequence is DNA replication and repair protein RecF (370 aa).

ATP is bound at residue 30–37 (GQNGMGKT).

This sequence belongs to the RecF family.

The protein localises to the cytoplasm. In terms of biological role, the RecF protein is involved in DNA metabolism; it is required for DNA replication and normal SOS inducibility. RecF binds preferentially to single-stranded, linear DNA. It also seems to bind ATP. The sequence is that of DNA replication and repair protein RecF from Bacteroides fragilis (strain YCH46).